We begin with the raw amino-acid sequence, 513 residues long: GMP synthase [glutamine-hydrolyzing] (513 aa).

The 198-residue stretch at 3–200 folds into the Glutamine amidotransferase type-1 domain; sequence SVTVLDFGSQ…LIDIAGIKPD (198 aa). Catalysis depends on Cys-80, which acts as the Nucleophile. Catalysis depends on residues His-174 and Glu-176. The GMPS ATP-PPase domain maps to 201 to 388; that stretch reads WSPKSFIGHQ…LGIAEDILMR (188 aa). 228-234 serves as a coordination point for ATP; sequence SGGVDST.

In terms of assembly, homodimer.

It catalyses the reaction XMP + L-glutamine + ATP + H2O = GMP + L-glutamate + AMP + diphosphate + 2 H(+). Its pathway is purine metabolism; GMP biosynthesis; GMP from XMP (L-Gln route): step 1/1. In terms of biological role, catalyzes the synthesis of GMP from XMP. This chain is GMP synthase [glutamine-hydrolyzing], found in Chlorobium phaeobacteroides (strain DSM 266 / SMG 266 / 2430).